The chain runs to 3110 residues: Huntingtin (3110 aa).

The segment at 1–58 (MKAFESLKSFQQQQQQQQPPPQPPPPPPPPPQPPQPPPQGQPPPPPPLPGPAEEPLHR) is disordered. Lys2 carries the post-translational modification N6-acetyllysine. Pro residues predominate over residues 18-52 (QPPPQPPPPPPPPPQPPQPPPQGQPPPPPPLPGPA). Residues Lys146 and Lys204 each carry the N6-acetyllysine modification. 2 HEAT repeats span residues 174-211 (PYLV…SFGN) and 216-253 (NEIK…HSRR). The residue at position 313 (Lys313) is an N6-acetyllysine. A phosphoserine mark is found at Ser387, Ser389, and Ser402. Position 412 is an N6-acetyllysine (Lys412). The interaction with ZDHHC17 stretch occupies residues 462–473 (GHDIITEQPRSQ). The segment at 487–549 (DLTSAATDGD…PDSAVTPSDS (63 aa)) is disordered. Over residues 521 to 549 (DGTQASSPISDSSQTTTEGPDSAVTPSDS) the composition is skewed to polar residues. Gly522 carries the N-myristoyl glycine lipid modification. Ser611 and Ser614 each carry phosphoserine. 2 HEAT repeats span residues 773–810 (FSLV…SLCS) and 873–911 (KLQE…KLFY). The tract at residues 1137–1195 (KAALPSLTNPPSLSPIRRKGKEKEPGEQTSTPMSPKKGGEASTASRQSDTSGPVTASKS) is disordered. A compositionally biased stretch (low complexity) spans 1140–1151 (LPSLTNPPSLSP). A phosphoserine; by CDK5 mark is found at Ser1150 and Ser1170. Residues 1178-1195 (STASRQSDTSGPVTASKS) show a composition bias toward polar residues. One copy of the HEAT 5 repeat lies at 1395–1432 (LFEPLVIKALKQYTTTTSVQLQKQVLDLLAQLVQLRVN). At Ser1845 the chain carries Phosphoserine. Residues 2363–2372 (IVVSLARLPL) carry the Nuclear export signal motif. The tract at residues 2601–2628 (EEEWDEEEEEEADAPAPTSPPVSPVNSR) is disordered. The span at 2602 to 2613 (EEWDEEEEEEAD) shows a compositional bias: acidic residues.

Belongs to the huntingtin family. In terms of assembly, interacts with PFN1. Interacts through its N-terminus with PRPF40A. Interacts with PQBP1. Interacts with SETD2. Interacts with SH3GLB1. Interacts with SYVN. Interacts with TPR; the interaction is inhibited by forms of Huntingtin with expanded polyglutamine stretch. Interacts with ZDHHC13 (via ANK repeats). Interacts with ZDHHC17 (via ANK repeats). Interacts with F8A1/F8A2/F8A3. Found in a complex with F8A1/F8A2/F8A3, HTT and RAB5A; mediates the recruitment of HTT by RAB5A. In terms of processing, phosphorylation at Ser-1150 and Ser-1170 by CDK5 in response to DNA damage in nuclei of neurons protects neurons against polyglutamine expansion as well as DNA damage mediated toxicity. Post-translationally, cleaved by caspases downstream of the polyglutamine stretch. Myristoylated at Gly-522, following proteolytic cleavage at Asp-521. As to expression, expressed to a high degree in all the regions of the brain of adults and in meiotic cells of the testis. In addition, very low levels are detected in various non-neuronal tissues (heart, muscle, liver, lung and kidney).

The protein localises to the cytoplasm. The protein resides in the nucleus. It localises to the cytoplasmic vesicle. Its subcellular location is the autophagosome. May play a role in microtubule-mediated transport or vesicle function. In terms of biological role, promotes the formation of autophagic vesicles. This is Huntingtin (Htt) from Rattus norvegicus (Rat).